The primary structure comprises 1031 residues: Error-prone DNA polymerase (1031 aa).

It belongs to the DNA polymerase type-C family. DnaE2 subfamily.

The protein resides in the cytoplasm. The enzyme catalyses DNA(n) + a 2'-deoxyribonucleoside 5'-triphosphate = DNA(n+1) + diphosphate. Functionally, DNA polymerase involved in damage-induced mutagenesis and translesion synthesis (TLS). It is not the major replicative DNA polymerase. The polypeptide is Error-prone DNA polymerase (Pseudomonas aeruginosa (strain ATCC 15692 / DSM 22644 / CIP 104116 / JCM 14847 / LMG 12228 / 1C / PRS 101 / PAO1)).